The primary structure comprises 274 residues: Putative septum site-determining protein MinD (274 aa).

22–29 (KGGVGKTT) is an ATP binding site.

The protein belongs to the ParA family. MinD subfamily.

The protein resides in the plastid. The protein localises to the chloroplast. In terms of biological role, ATPase required for the correct placement of the division site. In Nephroselmis olivacea (Green alga), this protein is Putative septum site-determining protein MinD (minD-A).